A 182-amino-acid chain; its full sequence is MVKALLVGSKVLIPNVDESRYIYSTGFYGKAIGISKPKGPKDIIRPLELSLIESVYLAKKGLIKVIDKNGEVLEYEKLYEYSSKIINKFDIMYRVYEDLREKGFIVRSGVKYGADFAVYTLGPGLEHAPYVVIAVDIDEEITPHELLSFGRVSHSTRKRLVLALVDRKSESVRYIMFKWVKM.

Residues Y119, H127, and K158 contribute to the active site.

The protein belongs to the tRNA-intron endonuclease family. Archaeal short subfamily. In terms of assembly, homotetramer; although the tetramer contains four active sites, only two participate in the cleavage. Therefore, it should be considered as a dimer of dimers.

It catalyses the reaction pretRNA = a 3'-half-tRNA molecule with a 5'-OH end + a 5'-half-tRNA molecule with a 2',3'-cyclic phosphate end + an intron with a 2',3'-cyclic phosphate and a 5'-hydroxyl terminus.. In terms of biological role, endonuclease that removes tRNA introns. Cleaves pre-tRNA at the 5'- and 3'-splice sites to release the intron. The products are an intron and two tRNA half-molecules bearing 2',3' cyclic phosphate and 5'-OH termini. Recognizes a pseudosymmetric substrate in which 2 bulged loops of 3 bases are separated by a stem of 4 bp. The polypeptide is tRNA-splicing endonuclease (Saccharolobus islandicus (strain M.14.25 / Kamchatka #1) (Sulfolobus islandicus)).